Reading from the N-terminus, the 89-residue chain is GTP cyclohydrolase 1 feedback regulatory protein (89 aa).

The protein belongs to the GFRP family. In terms of assembly, homopentamer. Forms a complex with GCH1 where a GCH1 homodecamer is sandwiched by two GFRP homopentamers.

It is found in the nucleus. Its subcellular location is the nucleus membrane. It localises to the cytoplasm. The protein resides in the cytosol. Its function is as follows. Mediates tetrahydrobiopterin inhibition of GTP cyclohydrolase 1. This is GTP cyclohydrolase 1 feedback regulatory protein (gchfr) from Danio rerio (Zebrafish).